Consider the following 101-residue polypeptide: NADH-quinone oxidoreductase subunit K (101 aa).

Transmembrane regions (helical) follow at residues 4 to 24 (LGHYLTLGAILFALSVIGIFL), 30 to 50 (IVLLMCIELMLLAVNLNFVAF), and 61 to 81 (VFVFFILTVAAAESAIGLAIL).

The protein belongs to the complex I subunit 4L family. As to quaternary structure, NDH-1 is composed of 14 different subunits. Subunits NuoA, H, J, K, L, M, N constitute the membrane sector of the complex.

The protein resides in the cell inner membrane. The enzyme catalyses a quinone + NADH + 5 H(+)(in) = a quinol + NAD(+) + 4 H(+)(out). In terms of biological role, NDH-1 shuttles electrons from NADH, via FMN and iron-sulfur (Fe-S) centers, to quinones in the respiratory chain. The immediate electron acceptor for the enzyme in this species is believed to be ubiquinone. Couples the redox reaction to proton translocation (for every two electrons transferred, four hydrogen ions are translocated across the cytoplasmic membrane), and thus conserves the redox energy in a proton gradient. The chain is NADH-quinone oxidoreductase subunit K from Leptothrix cholodnii (strain ATCC 51168 / LMG 8142 / SP-6) (Leptothrix discophora (strain SP-6)).